We begin with the raw amino-acid sequence, 1684 residues long: Protein Wiz (1684 aa).

Residues 1–77 (MEGLLAGGLA…PGLSEALPRA (77 aa)) form a disordered region. The segment covering 13–24 (DHPRGPAPREDI) has biased composition (basic and acidic residues). C2H2-type zinc fingers lie at residues 308 to 330 (FPCIECSIYFKHKEHLLEHMSQH), 345 to 367 (LACSECGWAFTEPTALEQHWQLH), 454 to 477 (NTCVHCGFTAPSKSLLREHTRLVH), 734 to 756 (RKCPYCPDRFHYGIGLANHVRGH), and 802 to 824 (MRCDFCGAGFDTRAGLSSHARAH). A disordered region spans residues 854-876 (LPPSPLGREPGGPPRSFLTSRRP). The C2H2-type 6 zinc finger occupies 903 to 925 (TTCEVCGACFETRKGLSSHARSH). Glycyl lysine isopeptide (Lys-Gly) (interchain with G-Cter in SUMO2) cross-links involve residues Lys-916, Lys-972, Lys-988, Lys-1000, and Lys-1021. The tract at residues 1005 to 1072 (FSAKGLTHPS…PLNLTSGPEP (68 aa)) is disordered. Ser-1029 carries the phosphoserine modification. Thr-1031 carries the phosphothreonine modification. Glycyl lysine isopeptide (Lys-Gly) (interchain with G-Cter in SUMO2) cross-links involve residues Lys-1033 and Lys-1038. Residues Ser-1039 and Ser-1045 each carry the phosphoserine modification. The span at 1040–1057 (PQLSLSPRPTSPKAQWPQ) shows a compositional bias: polar residues. Phosphothreonine is present on Thr-1049. Phosphoserine occurs at positions 1050 and 1058. The interaction with CTBP1 and CTBP2 1 stretch occupies residues 1063 to 1067 (PLNLT). The C2H2-type 7 zinc-finger motif lies at 1076-1098 (IRCEFCGEFFENRKGLSSHARSH). A Glycyl lysine isopeptide (Lys-Gly) (interchain with G-Cter in SUMO2) cross-link involves residue Lys-1089. Residues Ser-1112 and Ser-1139 each carry the phosphoserine modification. A disordered region spans residues 1127 to 1208 (SRPGGHLHPP…GLATPSLPKK (82 aa)). Glycyl lysine isopeptide (Lys-Gly) (interchain with G-Cter in SUMO2) cross-links involve residues Lys-1141 and Lys-1145. Residues Ser-1155, Ser-1160, and Ser-1167 each carry the phosphoserine modification. Residues Lys-1171 and Lys-1172 each participate in a glycyl lysine isopeptide (Lys-Gly) (interchain with G-Cter in SUMO2) cross-link. 2 positions are modified to phosphoserine: Ser-1179 and Ser-1184. At Lys-1195 the chain carries N6,N6,N6-trimethyllysine; by EHMT2; alternate. At Lys-1195 the chain carries N6,N6-dimethyllysine; by EHMT2; alternate. Lys-1210 is covalently cross-linked (Glycyl lysine isopeptide (Lys-Gly) (interchain with G-Cter in SUMO2)). The interval 1247-1251 (PLNLS) is interaction with CTBP1 and CTBP2 2. A C2H2-type 8 zinc finger spans residues 1260–1282 (IRCEFCGEFFENRKGLSSHARSH). Residue Lys-1273 forms a Glycyl lysine isopeptide (Lys-Gly) (interchain with G-Cter in SUMO2) linkage. Position 1296 is a phosphoserine (Ser-1296). Lys-1315 is covalently cross-linked (Glycyl lysine isopeptide (Lys-Gly) (interchain with G-Cter in SUMO2)). A disordered region spans residues 1320-1384 (AGDLAPALTE…SKPSAASYLG (65 aa)). Residues 1335–1351 (AAPGALHSPLPLSPLAS) are compositionally biased toward low complexity. Residues Ser-1342 and Ser-1347 each carry the phosphoserine modification. Residues Lys-1376, Lys-1389, Lys-1403, Lys-1405, and Lys-1415 each participate in a glycyl lysine isopeptide (Lys-Gly) (interchain with G-Cter in SUMO2) cross-link. A C2H2-type 9 zinc finger spans residues 1430–1452 (ACCELCGLYFENRKALASHARAH). Residues Lys-1481, Lys-1497, and Lys-1510 each participate in a glycyl lysine isopeptide (Lys-Gly) (interchain with G-Cter in SUMO2) cross-link. 2 disordered regions span residues 1496–1587 (TKKF…GEEV) and 1592–1611 (QKLEEVRQPPPRVRPVPSLV). The residue at position 1550 (Ser-1550) is a Phosphoserine. Lys-1556 participates in a covalent cross-link: Glycyl lysine isopeptide (Lys-Gly) (interchain with G-Cter in SUMO1); alternate. Lys-1556 is covalently cross-linked (Glycyl lysine isopeptide (Lys-Gly) (interchain with G-Cter in SUMO2); alternate). The segment covering 1556–1574 (KSEEHQRQNINKFERRQAR) has biased composition (basic and acidic residues). Glycyl lysine isopeptide (Lys-Gly) (interchain with G-Cter in SUMO2) cross-links involve residues Lys-1567 and Lys-1593. The segment covering 1599 to 1611 (QPPPRVRPVPSLV) has biased composition (pro residues). The C2H2-type 10 zinc-finger motif lies at 1629–1655 (LKCRFCEVEFQGPLSIQEEWVRHLQRH). The interval 1662–1684 (SKADPPPEEPQAPQAQTAAVEAP) is disordered. Lys-1663 participates in a covalent cross-link: Glycyl lysine isopeptide (Lys-Gly) (interchain with G-Cter in SUMO2). Residues 1672–1684 (QAPQAQTAAVEAP) are compositionally biased toward low complexity.

Belongs to the krueppel C2H2-type zinc-finger protein family. As to quaternary structure, part of a complex containing at least CDYL, REST, WIZ, SETB1, EHMT1 and EHMT2. Interacts with EHMT1, EHMT2, CTBP1 and CTBP2. As to expression, according to PubMed:9795207, isoform L and isoform S are brain-specific. According to PubMed:16702210, isoform S is ubiquitously expressed.

Its subcellular location is the nucleus. Its function is as follows. May link EHMT1 and EHMT2 histone methyltransferases to the CTBP corepressor machinery. May be involved in EHMT1-EHMT2 heterodimer formation and stabilization. The polypeptide is Protein Wiz (Wiz) (Mus musculus (Mouse)).